Reading from the N-terminus, the 562-residue chain is MERVWWKEAVVYQIYPRSFYDSNGDGIGDIRGIIAKLDYLKELGVDVVWLSPVYKSPNDDNGYDISDYRDIMDEFGTMADWKTMLEEMHKRGIKLVMDLVVNHTSDEHPWFIESRKSKDNPYRDYYIWRPGKNGKEPNNWESVFSGSAWEYDEMTGEYYLHLFSKKQPDLNWENPKVRREVYEMMKFWLDKGVDGFRMDVINMISKVPELPDGEPQSGKKYASGSRYYMNGPRVHEFLQEMNREVLSKYDIMTVGETPGVTPKEGILYTDPSRRELNMVFQFEHMDLDSGPGGKWDIRPWSLADLKKTMTKWQKELEGKGWNSLYLNNHDQPRAVSRFGDDGKYRVESAKMLATFLHMMQGTPYIYQGEEIGMTNVRFPSIEDYRDIETLNMYKERVEEYGEDPQEVMEKIYYKGRDNARTPMQWDDSENAGFTAGTPWIPVNPNYKEINVKAALEDPNSVFHYYKKLIQLRKQHDIIVYGTYDLILEDDPYIYRYTRTLGNEQLIVITNFSEKTPVFRLPDHIIYKTKELLISNYDVDEAEELKEIRLRPWEARVYKIRLP.

Residues D21, N23, D25, and D29 each coordinate Ca(2+). D199 functions as the Nucleophile in the catalytic mechanism. E256 acts as the Proton donor in catalysis.

The protein belongs to the glycosyl hydrolase 13 family.

The protein localises to the cytoplasm. The catalysed reaction is Hydrolysis of (1-&gt;6)-alpha-D-glucosidic linkages in some oligosaccharides produced from starch and glycogen by alpha-amylase, and in isomaltose.. This chain is Oligo-1,6-glucosidase (malL), found in Parageobacillus thermoglucosidasius (Geobacillus thermoglucosidasius).